The following is a 710-amino-acid chain: F-box only protein 40 (710 aa).

The segment at 53–114 adopts a TRAF-type zinc-finger fold; that stretch reads EHTLLCPLEQ…VDSETFLHEN (62 aa). 2 disordered regions span residues 152-174 and 234-279; these read DATE…GAVG and GSLG…SQEL. Basic and acidic residues predominate over residues 238–248; sequence KSEDKNGDVAG. The 55-residue stretch at 572-626 folds into the F-box domain; sequence LNSLTSLPLEVLQYIAGFLDSISLSQLSQVSVLMRNICATLLQERGMVLSQWKKK.

In terms of assembly, directly interacts with SKP1 and CUL1. As to expression, expressed only in heart and skeletal muscle.

The protein localises to the cytoplasm. In terms of biological role, probable substrate-recognition component of the SCF (SKP1-CUL1-F-box protein)-type E3 ubiquitin ligase complex that may function in myogenesis. This Mus musculus (Mouse) protein is F-box only protein 40 (Fbxo40).